The sequence spans 270 residues: uncharacterized protein (270 aa).

10 consecutive transmembrane segments (helical) span residues 12–32, 35–55, 64–84, 88–108, 117–137, 138–158, 171–191, 194–214, 226–246, and 248–268; these read AAIV…RNVG, TLSV…PFCL, TLLG…AAIQ, VAMA…LSVL, TLLA…PYAE, LTFG…VFVL, ITFY…LMFG, GSWL…FVLF, APIL…FYFG, and TLTL…LIAW. 2 consecutive EamA domains span residues 19–133 and 150–269; these read VLMG…LMLT and LSYA…IAWR.

Belongs to the EamA transporter family.

Its subcellular location is the cell membrane. This is an uncharacterized protein from Archaeoglobus fulgidus (strain ATCC 49558 / DSM 4304 / JCM 9628 / NBRC 100126 / VC-16).